The primary structure comprises 133 residues: Profilin-3 (133 aa).

The protein belongs to the profilin family. Occurs in many kinds of cells as a complex with monomeric actin in a 1:1 ratio.

It localises to the cytoplasm. It is found in the cytoskeleton. In terms of biological role, binds to actin and affects the structure of the cytoskeleton. At high concentrations, profilin prevents the polymerization of actin, whereas it enhances it at low concentrations. By binding to PIP2, it inhibits the formation of IP3 and DG. The protein is Profilin-3 (PRO3) of Nicotiana tabacum (Common tobacco).